Here is a 2286-residue protein sequence, read N- to C-terminus: IMSCHDVGGRRRFEDSEFTLRVYPGSLSESTIYCPVSARKVTTAAEVIERVIERLQLDRTRLYVLAEVKEFGGEEWILNPSDCPAQRMMLWPRMALENRLLGEDYRFLLREKNLDGSIHYGSLQMWLRVTEERRRMVERGLLPQPPAAQFVADLCSLPDLNEHTMLENLRGRFRQENIYTYVGSILIAVNPFKFLPIYNPKYVKMYDKHRLGQLEPHIFAVADAAYHAMLQRHRNQCIVISGESGSGKTQSTNFLIHHLTALSQKGFASGVEQIILGAGPVLEAFGNAKTAHNNNSSRFGKFIQVNYQESGTVRGAYVEKYLLEKSRLVYQEHNERCSCVNIFSKLVCHELKVCVCMCVQDCFSVEAEDLKHDFERLQLAMEMVGFLPTTRKQIFSLLSAILHLGNIRYKKKTFRDDSIDICNPEVLPIVSELLEVKEEMLFEALTTRKTVTVGERLIVPYKLAEVRKGTSHQLIQTFRTSHSLLHQRYFHIHTSPTRILSIGVLDIFGFEDYENNSFEQFCINFANETLQHYFNQHVFKLEQEEYRSEGINWHMIDYIDNTACINLISKKPTALLHLLDEECNFPQASNQTLLDKFKRQHEGNAYMEFPAVMEPAFIIRHYAGKVKYSVKDFREKNTDHLRPDIVSLLKSSRKAFICGLMGLDPVASFRWAVIRAFFRALVAFRHAGLQHRDNRSSSDVHLQPQKSVDSFSFLHHPVHQRSLEILQRCKDDRYNSCVSRRSPRTPLSDLQGANTFSSNGRGWRSERVSSFAHEDEGIFVNSVNNRLLERAQGILMRNKNYKPKPSLPKHLLDVKSLKYLSSLTLHDRITKSLLHLHKKKKPPSISAQFNVSLNKLMETLGQSEPYFVKCIRSNAEKLPLRFNDALVLRQLRYTGMLETVRIRQSGYSVKYSFKDFAHHFHVLLPAGFSASQMGIREFLRSADLEPSGYQVGRSMVFLHERLRQRLQDELHQEVLRRIVCLQRSFRTQRDRKHFCRQRRAARLIQRWWRSCISQADGSVCALELQQGAALRLQAVWRGFRARRLYLQQRRAVLIIQRCWRRVLNTRNTAATLIQAVWRTRTHRRSFLQQRRAAVTLQAACRGQQSRQRCRILREQQCREQSKHPSTVTKSLHQNTEEAEKLEEVWEKQTTDPPPKAVDDSTLKSRNKRESRRQRELEQATFSLELLKVRSGSNTEDAQIPPSKHHPPHQASTDSQESFELLENEDSASAKLELSKSEPMEVNQTSPAASFKPHFYIPDEDGSPINSAPQTPNRAKQIREKKESVVVIISMQKENPVDRSSLQTLEAQDVPLSNGESASDCSIIPEPRTNHELDTGSSFSVSSKPLQLDLRSAASNEEPSEPKADVQKKFVSQSISISMKETAANVAFPPKRSRLTFSKSDKDLVNQERSLAIQREAGFRSLKNRDVTRAGCKKKARMARTRSDFLSRACSTEADCEEDEDDEYEDTPVLSCTRPPHSPSSPDIDCVFHSDSEMSSQKEQKRIQKTMSSGDLGKMDSLRKSMSQTDSRVRGKMRFWSKSKHGDKKISSRGRSADSELTDRRNDSPPGSPEHAGVSERRRDSKENREPMLGMMSMKRRRSLKISSVSLESTAWQNDALHILTSTADYRSMNDFLMKKISDLDAEDGQKDTAVDVVFKKALKEFRLNIFNSYSTALAMDDGRSIRYKDLYALFEHILEKSMRLEQRDWSESPVKVWVNTFKVFLDEFMTEYKPMDGTISKAPKPERKKRRKKESDTVEEHMGHIFKSTQYSIPTYCEFCSSLIWMMDKACVCKLCRYACHKKCCLRMTTKCSKKFDPELSSRQFGVELSRLTSDERSVPLVVEKLINYIEMHGLYTEGIYRKSGSTNKIKELKQGLDTDANSVNLDDYNIHVIASVLKQWLRDLPNPLMTFELYEEFLRAMGLQDKREVVQGVYSIIDQLSRTHLNTLERLIFHLVRISFQEETNRMSANALAIVFAPCILRCPDTTDPLQSVRDISKTTACVELIICEQMRKYKARLKDINTLEFAENKAKSRLTHIRRSMGKSRARKSGHHTPSPPLSPRASEREEPVDEGAEPVLSEQQQAAMQQEEKVLTQQIENLQKEKEELTYEMLALEPRASDDEMLESEASIGTADSSENLMESEGAASDPWEKSPGAVSASRWRKSESKSRRCLRRQPESLDSVDSAVASLSSVSSTPHYRFRSSSSGPLFSSSSPTGDLHILPDPESCEQASLSARCASSSEKTRPRPRANRSCPPKPREPGDTGGRRREHEFGSSQPLVLYGSNEFMV.

The region spanning 16-114 (SEFTLRVYPG…YRFLLREKNL (99 aa)) is the Ras-associating domain. The 824-residue stretch at 148–971 (AQFVADLCSL…LRQRLQDELH (824 aa)) folds into the Myosin motor domain. A helical transmembrane segment spans residues 178–198 (IYTYVGSILIAVNPFKFLPIY). 242–249 (GESGSGKT) is an ATP binding site. The segment at 853–875 (LNKLMETLGQSEPYFVKCIRSNA) is actin-binding. IQ domains follow at residues 976–996 (RRIV…HFCR), 1025–1054 (QQGA…AVLI), 1066–1095 (RNTA…AAVT), and 1089–1118 (QRRA…QQCR). The tract at residues 976–1113 (RRIVCLQRSF…QSRQRCRILR (138 aa)) is neck or regulatory domain. Residues 1114 to 2254 (EQQCREQSKH…PRANRSCPPK (1141 aa)) form a tail region. 4 disordered regions span residues 1118 to 1279 (REQS…QIRE), 1308 to 1341 (DVPL…FSVS), 1455 to 1588 (CEED…EPML), and 1732 to 1754 (DGTI…SDTV). The span at 1123–1133 (HPSTVTKSLHQ) shows a compositional bias: polar residues. Residues 1134–1149 (NTEEAEKLEEVWEKQT) are compositionally biased toward basic and acidic residues. Positions 1263–1273 (PINSAPQTPNR) are enriched in polar residues. Positions 1455 to 1465 (CEEDEDDEYED) are enriched in acidic residues. Residues 1485–1501 (CVFHSDSEMSSQKEQKR) are compositionally biased toward basic and acidic residues. Over residues 1529-1542 (RGKMRFWSKSKHGD) the composition is skewed to basic residues. 2 stretches are compositionally biased toward basic and acidic residues: residues 1550–1562 (RSAD…RRND) and 1572–1585 (GVSE…ENRE). A Phorbol-ester/DAG-type zinc finger spans residues 1759–1808 (GHIFKSTQYSIPTYCEFCSSLIWMMDKACVCKLCRYACHKKCCLRMTTKC). Residues 1823–2011 (VELSRLTSDE…LIICEQMRKY (189 aa)) form the Rho-GAP domain. Positions 2032-2049 (LTHIRRSMGKSRARKSGH) are enriched in basic residues. 2 disordered regions span residues 2032–2087 (LTHI…QQEE) and 2113–2286 (PRAS…EFMV). The stretch at 2080 to 2107 (QAAMQQEEKVLTQQIENLQKEKEELTYE) forms a coiled coil. Composition is skewed to low complexity over residues 2176 to 2192 (SLDS…SVSS) and 2200 to 2211 (SSSSGPLFSSSS). Polar residues predominate over residues 2226 to 2238 (EQASLSARCASSS). The segment covering 2254-2270 (KPREPGDTGGRRREHEF) has biased composition (basic and acidic residues).

The protein belongs to the TRAFAC class myosin-kinesin ATPase superfamily. Myosin family.

It is found in the membrane. Its subcellular location is the cytoplasm. The protein resides in the synapse. It localises to the cell projection. The protein localises to the growth cone. In terms of biological role, myosins are actin-based motor molecules with ATPase activity. Unconventional myosins serve in intracellular movements. Regulates Rho by stimulating it's GTPase activity in neurons. Required for the regulation of neurite branching and motor neuron axon guidance. In Danio rerio (Zebrafish), this protein is Unconventional myosin-IXAb (myo9ab).